We begin with the raw amino-acid sequence, 324 residues long: Bacilliredoxin reductase Bdr (324 aa).

Cys-220 bears the S-bacillithiol cysteine disulfide mark.

As to quaternary structure, interacts with BrxC. FAD is required as a cofactor. In terms of processing, C-terminal Cys can react with bacillithiol (BSH) to form mixed disulfides. S-bacillithiolation protects Cys residues against overoxidation by acting as a redox switch in response to oxidative stress.

Functionally, S-bacillithiolation is the formation of mixed disulfide bonds between protein thiols and the general thiol reductant bacillithiol (BSH) under oxidative stress. BSH is an equivalent of glutathione (GSH) in Firmicutes. This protein is a NADPH-dependent bacilliredoxin reductase, which debacillithiolates (removes BSH) the S-bacillithiolated BrxB (BrxB-SSB), and to a lesser extent BrxC (BrxC-SSB). Involved in a redox cascade increasing the efficacy of BrxB function by reducing BrxB-SSB and thus reactivating it. Has NADPH-dependent oxidase activity under aerobic conditions producing hydrogen peroxide (H(2)O(2)). The chain is Bacilliredoxin reductase Bdr from Bacillus subtilis (strain 168).